The primary structure comprises 614 residues: Vitamin B12 transporter BtuB (614 aa).

The first 20 residues, 1–20 (MIKKASLLTACSVTAFSAWA), serve as a signal peptide directing secretion. Positions 26–33 (DTLVVTAN) match the TonB box motif. The region spanning 38–152 (PRSTVLAPTT…IGGVVNIITT (115 aa)) is the TBDR plug domain. Cyanocob(III)alamin is bound by residues leucine 83, serine 85, asparagine 92, and 110-111 (VS). Residues 155–614 (EPGTEISAGW…EYTLSGSYTF (460 aa)) form the TBDR beta-barrel domain. Beta stranded transmembrane passes span 158–165 (TEISAGWG), 169–178 (YQNYDVSTQQ), and 184–195 (TRVTLLGDYAHT). Residues aspartate 199, glutamine 211, aspartate 213, and aspartate 215 each coordinate Ca(2+). 2 consecutive transmembrane segments (beta stranded) span residues 217-227 (FLSKTLYGALE) and 232-248 (DAWS…NRTN). 2 residues coordinate Ca(2+): tyrosine 249 and aspartate 250. Alanine 251 is a cyanocob(III)alamin binding site. Aspartate 261 lines the Ca(2+) pocket. The next 14 membrane-spanning stretches (beta stranded) occupy residues 263-277 (RKLY…LRYN), 279-296 (ELIK…KDYN), 309-325 (TLDE…NNVI), 328-337 (HGSIGAGVDW), 353-369 (YDQR…QQVG), 371-381 (FTFEGAARSDD), 385-400 (FGRH…WEFI), 403-417 (YRFI…KAPN), 434-443 (KSKQWEGAFE), 449-458 (VNWRISGYRN), 473-490 (YYNE…TANF), 494-509 (PLTH…ARNA), 517-529 (RRAK…QLDW), and 535-550 (DWGI…YDKD). Residue threonine 309 coordinates cyanocob(III)alamin. Arginine 517 serves as a coordination point for cyanocob(III)alamin. A cyanocob(III)alamin-binding site is contributed by tyrosine 551. The next 3 membrane-spanning stretches (beta stranded) occupy residues 558 to 572 (TVKM…LAVA), 585 to 596 (IANLFDKDYETV), and 602 to 614 (AGRE…SYTF). A TonB C-terminal box motif is present at residues 597-614 (YGYQTAGREYTLSGSYTF).

Belongs to the TonB-dependent receptor family. BtuB (TC 1.B.14.3.1) subfamily.

The protein resides in the cell outer membrane. Its function is as follows. Involved in the active translocation of vitamin B12 (cyanocobalamin) across the outer membrane to the periplasmic space. It derives its energy for transport by interacting with the trans-periplasmic membrane protein TonB. In Escherichia coli O9:H4 (strain HS), this protein is Vitamin B12 transporter BtuB.